Consider the following 273-residue polypeptide: Elongation factor Ts (273 aa).

Positions 80–83 (TDFV) are involved in Mg(2+) ion dislocation from EF-Tu.

This sequence belongs to the EF-Ts family.

The protein resides in the cytoplasm. Functionally, associates with the EF-Tu.GDP complex and induces the exchange of GDP to GTP. It remains bound to the aminoacyl-tRNA.EF-Tu.GTP complex up to the GTP hydrolysis stage on the ribosome. The chain is Elongation factor Ts from Tropheryma whipplei (strain Twist) (Whipple's bacillus).